Consider the following 129-residue polypeptide: Glycoprotein hormone alpha-2 (129 aa).

An N-terminal signal peptide occupies residues 1-23; that stretch reads MPMASPQTLVLYLLVLAVTEAWG. 4 cysteine pairs are disulfide-bonded: cysteine 31–cysteine 89, cysteine 48–cysteine 103, cysteine 57–cysteine 119, and cysteine 61–cysteine 121. N-linked (GlcNAc...) asparagine glycosylation is found at asparagine 37 and asparagine 81.

This sequence belongs to the glycoprotein hormones subunit alpha family. In terms of assembly, heterodimer with GPHB5; this heterodimer interacts with thyroid-stimulating hormone receptor (TSHR), and hence stimulates cAMP production. Post-translationally, glycosylated. As to expression, found in a variety of tissues.

It localises to the secreted. Its function is as follows. Functions as a heterodimeric glycoprotein hormone with GPHB5 able to bind and activate the thyroid-stimulating hormone receptor (TSHR), leading to increased cAMP production. Plays a central role in controlling thyroid cell metabolism. The polypeptide is Glycoprotein hormone alpha-2 (GPHA2) (Homo sapiens (Human)).